Consider the following 204-residue polypeptide: MTQGLLYVISAPSGAGKTSLVSALCAGAPDLAVSVSHTTRPQRPGEVPGQDYWFVDKAEFEKMIANEAFLEYARVFDNYYGTAKTTVEEVLATGRDAVLEIDWQGARQVRRLMPACVSVFILPPSRQALEQRLRTRQQDSEAVIARRMEAAISEMSHYAEYDYLIVNDDFNLALNQLRAIVQTQRLTVQRQAPRLGRLIADLLG.

One can recognise a Guanylate kinase-like domain in the interval 4-182; the sequence is GLLYVISAPS…ALNQLRAIVQ (179 aa). An ATP-binding site is contributed by 11–18; that stretch reads APSGAGKT.

It belongs to the guanylate kinase family.

The protein resides in the cytoplasm. It carries out the reaction GMP + ATP = GDP + ADP. Functionally, essential for recycling GMP and indirectly, cGMP. This Methylococcus capsulatus (strain ATCC 33009 / NCIMB 11132 / Bath) protein is Guanylate kinase.